A 452-amino-acid polypeptide reads, in one-letter code: Translation initiation factor eIF2B subunit gamma (452 aa).

At methionine 1 the chain carries N-acetylmethionine. Serine 260 carries the phosphoserine modification.

The protein belongs to the eIF-2B gamma/epsilon subunits family. Component of the translation initiation factor 2B (eIF2B) complex which is a heterodecamer of two sets of five different subunits: alpha, beta, gamma, delta and epsilon. Subunits alpha, beta and delta comprise a regulatory subcomplex and subunits epsilon and gamma comprise a catalytic subcomplex. Within the complex, the hexameric regulatory complex resides at the center, with the two heterodimeric catalytic subcomplexes bound on opposite sides.

It is found in the cytoplasm. Its subcellular location is the cytosol. With respect to regulation, activated by the chemical integrated stress response (ISR) inhibitor ISRIB which stimulates guanine nucleotide exchange factor activity for both phosphorylated and unphosphorylated eIF2. Acts as a component of the translation initiation factor 2B (eIF2B) complex, which catalyzes the exchange of GDP for GTP on the eukaryotic initiation factor 2 (eIF2) complex gamma subunit. Its guanine nucleotide exchange factor activity is repressed when bound to eIF2 complex phosphorylated on the alpha subunit, thereby limiting the amount of methionyl-initiator methionine tRNA available to the ribosome and consequently global translation is repressed. The chain is Translation initiation factor eIF2B subunit gamma (EIF2B3) from Homo sapiens (Human).